The chain runs to 418 residues: Tyrosine--tRNA ligase (418 aa).

Tyr-39 lines the L-tyrosine pocket. A 'HIGH' region motif is present at residues 44–53; sequence CTADSLHVGS. L-tyrosine-binding residues include Tyr-176 and Gln-180. The 'KMSKS' region signature appears at 236 to 240; that stretch reads KMGKT. Lys-239 serves as a coordination point for ATP. An S4 RNA-binding domain is found at 350 to 416; the sequence is LPLAEMMRAT…KKRHALIRVL (67 aa).

This sequence belongs to the class-I aminoacyl-tRNA synthetase family. TyrS type 1 subfamily. As to quaternary structure, homodimer.

Its subcellular location is the cytoplasm. The catalysed reaction is tRNA(Tyr) + L-tyrosine + ATP = L-tyrosyl-tRNA(Tyr) + AMP + diphosphate + H(+). Catalyzes the attachment of tyrosine to tRNA(Tyr) in a two-step reaction: tyrosine is first activated by ATP to form Tyr-AMP and then transferred to the acceptor end of tRNA(Tyr). This is Tyrosine--tRNA ligase from Rhodospirillum rubrum (strain ATCC 11170 / ATH 1.1.1 / DSM 467 / LMG 4362 / NCIMB 8255 / S1).